A 490-amino-acid chain; its full sequence is Aspartyl/glutamyl-tRNA(Asn/Gln) amidotransferase subunit B (490 aa).

Belongs to the GatB/GatE family. GatB subfamily. In terms of assembly, heterotrimer of A, B and C subunits.

It catalyses the reaction L-glutamyl-tRNA(Gln) + L-glutamine + ATP + H2O = L-glutaminyl-tRNA(Gln) + L-glutamate + ADP + phosphate + H(+). The catalysed reaction is L-aspartyl-tRNA(Asn) + L-glutamine + ATP + H2O = L-asparaginyl-tRNA(Asn) + L-glutamate + ADP + phosphate + 2 H(+). Allows the formation of correctly charged Asn-tRNA(Asn) or Gln-tRNA(Gln) through the transamidation of misacylated Asp-tRNA(Asn) or Glu-tRNA(Gln) in organisms which lack either or both of asparaginyl-tRNA or glutaminyl-tRNA synthetases. The reaction takes place in the presence of glutamine and ATP through an activated phospho-Asp-tRNA(Asn) or phospho-Glu-tRNA(Gln). The sequence is that of Aspartyl/glutamyl-tRNA(Asn/Gln) amidotransferase subunit B from Prochlorococcus marinus (strain AS9601).